Here is a 408-residue protein sequence, read N- to C-terminus: Imidazolonepropionase (408 aa).

Fe(3+) is bound by residues His72 and His74. Zn(2+) contacts are provided by His72 and His74. 4-imidazolone-5-propanoate-binding residues include Arg81, Tyr144, and His177. Tyr144 contacts N-formimidoyl-L-glutamate. Fe(3+) is bound at residue His242. Residue His242 participates in Zn(2+) binding. 4-imidazolone-5-propanoate is bound at residue Gln245. Residue Asp317 coordinates Fe(3+). Asp317 is a Zn(2+) binding site. N-formimidoyl-L-glutamate contacts are provided by Asn319 and Gly321. Position 322 (Thr322) interacts with 4-imidazolone-5-propanoate.

The protein belongs to the metallo-dependent hydrolases superfamily. HutI family. It depends on Zn(2+) as a cofactor. Fe(3+) is required as a cofactor.

The protein resides in the cytoplasm. It carries out the reaction 4-imidazolone-5-propanoate + H2O = N-formimidoyl-L-glutamate. Its pathway is amino-acid degradation; L-histidine degradation into L-glutamate; N-formimidoyl-L-glutamate from L-histidine: step 3/3. Functionally, catalyzes the hydrolytic cleavage of the carbon-nitrogen bond in imidazolone-5-propanoate to yield N-formimidoyl-L-glutamate. It is the third step in the universal histidine degradation pathway. This Aliivibrio fischeri (strain MJ11) (Vibrio fischeri) protein is Imidazolonepropionase.